The chain runs to 382 residues: MRPLDVTPTISPGAQDLPRTMHFAAEPPLQPLIIDITEEEKLEITYIGKKLKRKYKSYDDPGFISMLHLNAYTLLPERIAKVLSNFGTDFSDQQYGAVVLRGLIEIGQDELGPTPRSWQETDHEKIMEYGFISSLLHGAVPSKPVEYFAQRKGGGLMHAIIPDENMSFTQTGSGSRTDLFVHTEDAFLHNAADFLSFLFLRNEERVPSTLYSIRSHGRPDAILQELFKPIYKCPKDANYASEEALGDDIRTSVLYGSRSAPFMRFDAAEQIYNEDANQDPEALHNLKRFWEEARKLIYNDFVPESGDLIFVNNHLCAHGRNAFLAGFREENGQLVKCERRLMLRMMSKTSLINIREVTHPENPYLIMEEHYGKVYSAHLANL.

His182, Glu184, and His318 together coordinate Fe cation.

This sequence belongs to the clavaminate synthase family. Fe(2+) serves as cofactor.

The catalysed reaction is L-lysine + 2-oxoglutarate + O2 = (4R)-4-hydroxy-L-lysine + succinate + CO2. In terms of biological role, alpha-ketoglutarate-dependent dioxygenase that in vitro catalyzes the regio- and stereoselective hydroxylation of L-lysine, leading to (4R)-4-hydroxy-L-lysine. Cannot use D-lysine or L-ornithine as substrate. This Chitinophaga pinensis (strain ATCC 43595 / DSM 2588 / LMG 13176 / NBRC 15968 / NCIMB 11800 / UQM 2034) protein is L-lysine 4-hydroxylase.